We begin with the raw amino-acid sequence, 1239 residues long: MARAKLPRSPSEGKAGPGDTPAGSAAPEEPHGLSPLLPTRGGGSVGSDVGQRLHVEDFSLDSSLSQVQVEFYVNENTFKERLKLFFIKNQRSSLRIRLFNFSLKLLTCLLYIVRVLLDNPDQGIGCWGCTKYNYTFNGSSSEFHWAPILWVERKMALWVIQVIVATISFLETMLLIYLSYKGNIWEQIFHVSFVLEMINTLPFIITVFWPPLRNLFIPVFLNCWLAKHALENMINDFHRAILRTQSAMFNQVLILFCTLLCLVFTGTCGIQHLERAGGNLNLLTSFYFCIVTFSTVGFGDVTPKIWPSQLLVVILICVTLVVLPLQFEELVYLWMERQKSGGNYSRHRARTEKHVVLCVSSLKIDLLMDFLNEFYAHPRLQDYYVVILCPSEMDVQVRRVLQIPLWSQRVIYLQGSALKDQDLMRAKMDNGEACFILSSRNEVDRTAADHQTILRAWAVKDFAPNCPLYVQILKPENKFHVKFADHVVCEEECKYAMLALNCICPATSTLITLLVHTSRGQEGQESPEQWQRMYGRCSGNEVYHIRMGDSKFFREYEGKSFTYAAFHAHKKYGVCLIGLKREENKSILLNPGPRHILAASDTCFYINITKEENSAFIFKQEEKQKRRGLAGQALYEGPSRLPVHSIIASMGTVAMDLQNTDCRPSQGGSGGGGGKLTLPTENGSGSRRPSIAPVLELADSSALLPCDLLSDQSEDEVTPSDDEGLSVVEYVKGYPPNSPYIGSSPTLCHLLPVKAPFCCLRLDKGCKHNSYEDAKAYGFKNKLIIVSAETAGNGLYNFIVPLRAYYRSRRELNPIVLLLDNKPDHHFLEAICCFPMVYYMEGSVDNLDSLLQCGIIYADNLVVVDKESTMSAEEDYMADAKTIVNVQTMFRLFPSLSITTELTHPSNMRFMQFRAKDSYSLALSKLEKQERENGSNLAFMFRLPFAAGRVFSISMLDTLLYQSFVKDYMITITRLLLGLDTTPGSGYLCAMKVTEDDLWIRTYGRLFQKLCSSSAEIPIGIYRTECHVFSSEPHDLRAQSQISVNMEDCEDTREAKGPWGTRAASGGGSTHGRHGGSADPVEHPLLRRKSLQWARKLSRKSSKQAGKAPMTTDWITQQRLSLYRRSERQELSELVKNRMKHLGLPTTGYEDVANLTASDVMNRVNLGYLQDEMNDHHQNTLSYVLINPPPDTRLEPNDIVYLIRSDPLAHVTSSSQSRKSSCSNKLSSCNPETRDETQL.

The segment at 1 to 45 is disordered; that stretch reads MARAKLPRSPSEGKAGPGDTPAGSAAPEEPHGLSPLLPTRGGGSV. At 1–93 the chain is on the cytoplasmic side; it reads MARAKLPRSP…LFFIKNQRSS (93 aa). Residues 94–126 form a helical membrane-spanning segment; the sequence is LRIRLFNFSLKLLTCLLYIVRVLLDNPDQGIGC. Residues 127–153 lie on the Extracellular side of the membrane; the sequence is WGCTKYNYTFNGSSSEFHWAPILWVER. 2 N-linked (GlcNAc...) asparagine glycosylation sites follow: Asn-133 and Asn-137. A helical transmembrane segment spans residues 154–178; sequence KMALWVIQVIVATISFLETMLLIYL. Over 179–192 the chain is Cytoplasmic; the sequence is SYKGNIWEQIFHVS. Residues 193–208 traverse the membrane as a helical segment; that stretch reads FVLEMINTLPFIITVF. Topologically, residues 209–215 are extracellular; that stretch reads WPPLRNL. The chain crosses the membrane as a helical span at residues 216-233; that stretch reads FIPVFLNCWLAKHALENM. Residues 234–246 lie on the Cytoplasmic side of the membrane; it reads INDFHRAILRTQS. A helical transmembrane segment spans residues 247 to 274; sequence AMFNQVLILFCTLLCLVFTGTCGIQHLE. Over 275 to 281 the chain is Extracellular; sequence RAGGNLN. The segment at residues 282–302 is an intramembrane region (pore-forming); it reads LLTSFYFCIVTFSTVGFGDVT. K(+) contacts are provided by Val-296 and Gly-297. The Extracellular portion of the chain corresponds to 303-304; sequence PK. The chain crosses the membrane as a helical span at residues 305–338; it reads IWPSQLLVVILICVTLVVLPLQFEELVYLWMERQ. Residues 339–1239 are Cytoplasmic-facing; the sequence is KSGGNYSRHR…NPETRDETQL (901 aa). In terms of domain architecture, RCK N-terminal 1 spans 352-488; that stretch reads EKHVVLCVSS…FHVKFADHVV (137 aa). Na(+) contacts are provided by Leu-513, His-516, Ser-538, and Asn-540. The interval 658-689 is disordered; it reads QNTDCRPSQGGSGGGGGKLTLPTENGSGSRRP. Zn(2+) contacts are provided by Cys-758 and Cys-759. The K(+) site is built by Arg-761 and Lys-764. 2 residues coordinate Na(+): Arg-761 and Lys-764. Zn(2+)-binding residues include Cys-766 and His-768. Positions 769, 771, 777, and 778 each coordinate K(+). Residue Tyr-771 coordinates Na(+). Phe-779 contributes to the Na(+) binding site. An RCK N-terminal 2 domain is found at 781–921; it reads NKLIIVSAET…QFRAKDSYSL (141 aa). The K(+) site is built by Ser-787, Leu-818, Asp-820, Gly-842, and Asp-865. Disordered stretches follow at residues 1053-1081 and 1212-1239; these read REAK…ADPV and TSSS…ETQL. The segment covering 1213-1230 has biased composition (low complexity); the sequence is SSSQSRKSSCSNKLSSCN.

The protein belongs to the potassium channel family. Calcium-activated (TC 1.A.1.3) subfamily. KCa4.1/KCNT1 sub-subfamily. In terms of assembly, homotetramer; which constitutes the Na(+)-activated K(+) channel. Interacts with KCNT2; these heterodimer channels differ from the homomers in their unitary conductance, kinetic behavior, subcellular localization, and response to activation of protein kinase C. Interacts (via C-terminus) with FMR1; this interaction alters gating properties of KCNT1. Interacts with CRBN via its cytoplasmic C-terminus. Does not interact with KCNT2. Post-translationally, phosphorylated by protein kinase C. Phosphorylation of the C-terminal domain increases channel activity. In terms of tissue distribution, detected in brain and brainstem, in vestibular and oculomotor nuclei, the medial nucleus of the trapezoid in the auditory system, in olfactory bulb, red nucleus, and deep cerebellar nuclei. Detected in thalamus, substantia nigra, and amygdala (at protein level). Highly expressed in the brain and kidney.

The protein localises to the cell membrane. The enzyme catalyses K(+)(in) = K(+)(out). Its activity is regulated as follows. Activated by high intracellular Na(+) level. In addition to activation by Na(+), is cooperatively activated by intracellular Cl(-) levels. Activated upon stimulation of G-protein coupled receptors, such as CHRM1 and GRIA1. Sodium-activated K(+) channel. Acts as an important mediator of neuronal membrane excitability. Contributes to the delayed outward currents. Regulates neuronal bursting in sensory neurons. Contributes to synaptic development and plasticity. The sequence is that of Potassium channel subfamily T member 1 (Kcnt1) from Rattus norvegicus (Rat).